The primary structure comprises 235 residues: Deoxyribose-phosphate aldolase (235 aa).

The Proton donor/acceptor role is filled by Asp107. Catalysis depends on Lys167, which acts as the Schiff-base intermediate with acetaldehyde. Lys197 (proton donor/acceptor) is an active-site residue.

The protein belongs to the DeoC/FbaB aldolase family. DeoC type 1 subfamily. Homotetramer.

It is found in the cytoplasm. The catalysed reaction is 2-deoxy-D-ribose 5-phosphate = D-glyceraldehyde 3-phosphate + acetaldehyde. Its pathway is carbohydrate degradation; 2-deoxy-D-ribose 1-phosphate degradation; D-glyceraldehyde 3-phosphate and acetaldehyde from 2-deoxy-alpha-D-ribose 1-phosphate: step 2/2. Catalyzes a reversible aldol reaction between acetaldehyde and D-glyceraldehyde 3-phosphate to generate 2-deoxy-D-ribose 5-phosphate. This chain is Deoxyribose-phosphate aldolase, found in Aeropyrum pernix (strain ATCC 700893 / DSM 11879 / JCM 9820 / NBRC 100138 / K1).